We begin with the raw amino-acid sequence, 155 residues long: uncharacterized protein (155 aa).

Positions 1–14 are enriched in polar residues; sequence MLTLSGWITTQVPP. The tract at residues 1 to 44 is disordered; sequence MLTLSGWITTQVPPSSRAAADAKAARTGTAEQAEDPAAGTDAAD. The segment covering 17–30 has biased composition (low complexity); sequence RAAADAKAARTGTA.

This is an uncharacterized protein from Pseudomonas aeruginosa (strain ATCC 15692 / DSM 22644 / CIP 104116 / JCM 14847 / LMG 12228 / 1C / PRS 101 / PAO1).